We begin with the raw amino-acid sequence, 238 residues long: uncharacterized protein (238 aa).

Residues 10–33 (TLLALMISLSLSSLLLLSISHFYV) traverse the membrane as a helical segment.

It is found in the membrane. This is an uncharacterized protein from Haemophilus influenzae (strain ATCC 51907 / DSM 11121 / KW20 / Rd).